Consider the following 416-residue polypeptide: Gamma-glutamyl phosphate reductase (416 aa).

The protein belongs to the gamma-glutamyl phosphate reductase family.

The protein localises to the cytoplasm. The catalysed reaction is L-glutamate 5-semialdehyde + phosphate + NADP(+) = L-glutamyl 5-phosphate + NADPH + H(+). Its pathway is amino-acid biosynthesis; L-proline biosynthesis; L-glutamate 5-semialdehyde from L-glutamate: step 2/2. Catalyzes the NADPH-dependent reduction of L-glutamate 5-phosphate into L-glutamate 5-semialdehyde and phosphate. The product spontaneously undergoes cyclization to form 1-pyrroline-5-carboxylate. The protein is Gamma-glutamyl phosphate reductase of Salmonella agona (strain SL483).